The following is a 34-amino-acid chain: Photosystem I reaction center subunit XII (34 aa).

Residues 10 to 32 (IYIALVVAAHAAILALRLSVSLY) traverse the membrane as a helical segment.

It belongs to the PsaM family.

The protein localises to the cellular thylakoid membrane. This Synechococcus sp. (strain RCC307) protein is Photosystem I reaction center subunit XII.